The sequence spans 400 residues: Enoyl-[acyl-carrier-protein] reductase [NADH] (400 aa).

Residues 48–53, 74–75, 111–112, and 139–140 contribute to the NAD(+) site; these read GSSSGY, FE, DA, and LA. Residue Y225 participates in substrate binding. The active-site Proton donor is the Y235. NAD(+) contacts are provided by residues K244 and 273 to 275; that span reads VVT.

This sequence belongs to the TER reductase family. Monomer.

It carries out the reaction a 2,3-saturated acyl-[ACP] + NAD(+) = a (2E)-enoyl-[ACP] + NADH + H(+). The protein operates within lipid metabolism; fatty acid biosynthesis. Its function is as follows. Involved in the final reduction of the elongation cycle of fatty acid synthesis (FAS II). Catalyzes the reduction of a carbon-carbon double bond in an enoyl moiety that is covalently linked to an acyl carrier protein (ACP). This chain is Enoyl-[acyl-carrier-protein] reductase [NADH], found in Shewanella frigidimarina (strain NCIMB 400).